An 88-amino-acid chain; its full sequence is Putative membrane protein insertion efficiency factor (88 aa).

It belongs to the UPF0161 family.

It localises to the cell inner membrane. Could be involved in insertion of integral membrane proteins into the membrane. This chain is Putative membrane protein insertion efficiency factor, found in Rickettsia canadensis (strain McKiel).